Reading from the N-terminus, the 441-residue chain is 4-alpha-glucanotransferase (441 aa).

Ca(2+) is bound by residues D13, N15, D17, V19, and D21. The active-site Nucleophile is the D186. The active-site Proton donor is the E216.

The protein belongs to the glycosyl hydrolase 13 family. As to quaternary structure, monomer. Requires Ca(2+) as cofactor.

The protein resides in the cytoplasm. It carries out the reaction Transfers a segment of a (1-&gt;4)-alpha-D-glucan to a new position in an acceptor, which may be glucose or a (1-&gt;4)-alpha-D-glucan.. In Thermotoga maritima (strain ATCC 43589 / DSM 3109 / JCM 10099 / NBRC 100826 / MSB8), this protein is 4-alpha-glucanotransferase (mgtA).